The chain runs to 456 residues: Putative alanyl-tRNA editing protein alaX (456 aa).

The Zn(2+) site is built by histidine 125, histidine 129, cysteine 240, and histidine 244.

Belongs to the class-II aminoacyl-tRNA synthetase family. Alax-L subfamily. Zn(2+) serves as cofactor.

May function in trans to edit the amino acid moiety from incorrectly charged tRNA(Ala). This Saccharomyces cerevisiae (strain ATCC 204508 / S288c) (Baker's yeast) protein is Putative alanyl-tRNA editing protein alaX.